A 189-amino-acid polypeptide reads, in one-letter code: Ribosome maturation factor RimM (189 aa).

Positions 95-177 (EDDEFYYADL…AGLVDDPEEL (83 aa)) constitute a PRC barrel domain.

The protein belongs to the RimM family. Binds ribosomal protein uS19.

The protein localises to the cytoplasm. Its function is as follows. An accessory protein needed during the final step in the assembly of 30S ribosomal subunit, possibly for assembly of the head region. Essential for efficient processing of 16S rRNA. May be needed both before and after RbfA during the maturation of 16S rRNA. It has affinity for free ribosomal 30S subunits but not for 70S ribosomes. The protein is Ribosome maturation factor RimM of Rhizobium leguminosarum bv. trifolii (strain WSM2304).